Consider the following 376-residue polypeptide: Putative glutamate--cysteine ligase 2-1 (376 aa).

This sequence belongs to the glutamate--cysteine ligase type 2 family. YbdK subfamily.

It catalyses the reaction L-cysteine + L-glutamate + ATP = gamma-L-glutamyl-L-cysteine + ADP + phosphate + H(+). Functionally, ATP-dependent carboxylate-amine ligase which exhibits weak glutamate--cysteine ligase activity. The sequence is that of Putative glutamate--cysteine ligase 2-1 from Mycobacterium sp. (strain KMS).